Here is a 161-residue protein sequence, read N- to C-terminus: Small ribosomal subunit protein uS19 (161 aa).

Residues 1–19 show a composition bias toward basic residues; that stretch reads MARQKKYSGKGGARKKNKQ. The segment at 1 to 26 is disordered; the sequence is MARQKKYSGKGGARKKNKQKQSVAPR.

It belongs to the universal ribosomal protein uS19 family.

In terms of biological role, protein S19 forms a complex with S13 that binds strongly to the 16S ribosomal RNA. The polypeptide is Small ribosomal subunit protein uS19 (Methanococcus maripaludis (strain C6 / ATCC BAA-1332)).